We begin with the raw amino-acid sequence, 588 residues long: Pectinesterase 4 (588 aa).

The first 24 residues, 1–24 (MIGKVVVSVASILLIVGVAIGVVA), serve as a signal peptide directing secretion. N-linked (GlcNAc...) asparagine glycans are attached at residues Asn-86, Asn-206, and Asn-342. Substrate-binding residues include Thr-353 and Gln-383. Residue Asp-406 is the Proton donor of the active site. Asp-427 (nucleophile) is an active-site residue. Arg-496 and Trp-498 together coordinate substrate.

This sequence in the N-terminal section; belongs to the PMEI family. In the C-terminal section; belongs to the pectinesterase family. As to expression, expressed in pollen grains and pollen tubes.

The protein resides in the secreted. It is found in the cell wall. The catalysed reaction is [(1-&gt;4)-alpha-D-galacturonosyl methyl ester](n) + n H2O = [(1-&gt;4)-alpha-D-galacturonosyl](n) + n methanol + n H(+). The protein operates within glycan metabolism; pectin degradation; 2-dehydro-3-deoxy-D-gluconate from pectin: step 1/5. Its function is as follows. Acts in the modification of cell walls via demethylesterification of cell wall pectin. Plays an important role in growth of pollen tubes in female floral tissues, possibly via enhancing the interaction between the pollen tube and female floral tissues by modification of the cell walls. This is Pectinesterase 4 (PME4) from Arabidopsis thaliana (Mouse-ear cress).